The chain runs to 415 residues: Phosphoglycerate kinase (415 aa).

Residues 28–30 (DLN), Arg44, 67–70 (HQGR), Arg124, and Arg164 each bind substrate. Residues Glu336 and 362–365 (GGHF) contribute to the ATP site.

Belongs to the phosphoglycerate kinase family.

Its subcellular location is the cytoplasm. The enzyme catalyses (2R)-3-phosphoglycerate + ATP = (2R)-3-phospho-glyceroyl phosphate + ADP. Its pathway is carbohydrate degradation; glycolysis; pyruvate from D-glyceraldehyde 3-phosphate: step 2/5. The polypeptide is Phosphoglycerate kinase (pgk) (Aeropyrum pernix (strain ATCC 700893 / DSM 11879 / JCM 9820 / NBRC 100138 / K1)).